The primary structure comprises 278 residues: Formamidopyrimidine-DNA glycosylase (278 aa).

Pro2 acts as the Schiff-base intermediate with DNA in catalysis. Glu3 functions as the Proton donor in the catalytic mechanism. Lys57 acts as the Proton donor; for beta-elimination activity in catalysis. His90, Arg109, and Lys150 together coordinate DNA. Residues 235 to 269 (QVYGRAGEPCRQCGHPIEIAKHGQRSTFFCRHCQF) form an FPG-type zinc finger. The active-site Proton donor; for delta-elimination activity is the Arg259.

Belongs to the FPG family. In terms of assembly, monomer. It depends on Zn(2+) as a cofactor.

The catalysed reaction is Hydrolysis of DNA containing ring-opened 7-methylguanine residues, releasing 2,6-diamino-4-hydroxy-5-(N-methyl)formamidopyrimidine.. It catalyses the reaction 2'-deoxyribonucleotide-(2'-deoxyribose 5'-phosphate)-2'-deoxyribonucleotide-DNA = a 3'-end 2'-deoxyribonucleotide-(2,3-dehydro-2,3-deoxyribose 5'-phosphate)-DNA + a 5'-end 5'-phospho-2'-deoxyribonucleoside-DNA + H(+). Its function is as follows. Involved in base excision repair of DNA damaged by oxidation or by mutagenic agents. Acts as a DNA glycosylase that recognizes and removes damaged bases. Has a preference for oxidized purines, such as 7,8-dihydro-8-oxoguanine (8-oxoG). Has AP (apurinic/apyrimidinic) lyase activity and introduces nicks in the DNA strand. Cleaves the DNA backbone by beta-delta elimination to generate a single-strand break at the site of the removed base with both 3'- and 5'-phosphates. This Yersinia pestis (strain Pestoides F) protein is Formamidopyrimidine-DNA glycosylase.